The sequence spans 345 residues: HTH-type transcriptional regulator reg1 (345 aa).

An HTH lacI-type domain is found at Met-1–Gly-58. The segment at residues Leu-5 to Asn-24 is a DNA-binding region (H-T-H motif).

Transcription repressor involved in control of expression of alpha-amylase and chitinase genes and of actinorhodin production. This is HTH-type transcriptional regulator reg1 (reg1) from Streptomyces lividans.